Consider the following 221-residue polypeptide: Extracellular superoxide dismutase [Cu-Zn] (221 aa).

The N-terminal stretch at methionine 1–serine 19 is a signal peptide. The N-linked (GlcNAc...) asparagine glycan is linked to asparagine 56. The Cu cation site is built by histidine 70, histidine 72, and histidine 87. Residues cysteine 81 and cysteine 170 are joined by a disulfide bond. Zn(2+) contacts are provided by histidine 87, histidine 95, histidine 104, and aspartate 107. Position 144 (histidine 144) interacts with Cu cation.

Belongs to the Cu-Zn superoxide dismutase family. Cu cation serves as cofactor. Zn(2+) is required as a cofactor. Isoform 2 is preferentially expressed in eggs.

Its subcellular location is the secreted. It is found in the extracellular space. It localises to the membrane. It carries out the reaction 2 superoxide + 2 H(+) = H2O2 + O2. Functionally, protects cells against oxidative stress by converting superoxide radicals to hydrogen peroxide. Oxidative stress is involved in various biological dysfunctions and senescence. The polypeptide is Extracellular superoxide dismutase [Cu-Zn] (sod-4) (Caenorhabditis elegans).